Consider the following 451-residue polypeptide: uncharacterized protein (451 aa).

Positions 1–18 are cleaved as a signal peptide; sequence MRTRITLALAVLLLLLAG. Residue Cys19 is the site of N-palmitoyl cysteine attachment. Cys19 carries the S-diacylglycerol cysteine lipid modification. The tract at residues 424–451 is disordered; the sequence is TSADPPPGVPRAGKRNIRDATSRLPSTP.

The protein resides in the cell membrane. Its function is as follows. May participate in oleandomycin glycosylation and secretion during antibiotic production. This is an uncharacterized protein from Streptomyces antibioticus.